Here is a 327-residue protein sequence, read N- to C-terminus: Gamma-resorcylate decarboxylase (327 aa).

Zn(2+)-binding residues include Glu-8 and His-10. Phe-23, His-164, and Asp-287 together coordinate 2,6-dihydroxybenzoate. Positions 164 and 287 each coordinate Zn(2+). Asp-287 is a catalytic residue.

The protein belongs to the metallo-dependent hydrolases superfamily. ACMSD family. In terms of assembly, homotetramer. Dimer of dimers. It depends on Zn(2+) as a cofactor.

The enzyme catalyses 2,6-dihydroxybenzoate + H(+) = resorcinol + CO2. The catalysed reaction is 2,3-dihydroxybenzoate + H(+) = catechol + CO2. The protein operates within aromatic compound metabolism. Inhibited by CuCl(2), monoiodoacetate and diethylpyrocarbonate. Inhibited by 2,3-dihydroxybenzaldehyde, which is an analog of the substrate 2,3-dihydroxybenzoate. In terms of biological role, involved in the gamma-resorcylate (2,6-dihydroxybenzoate) catabolism. Catalyzes the reversible decarboxylation of gamma-resorcylate to resorcinol. The reaction is reversible, but equilibrium greatly favors the decarboxylation reaction. Also catalyzes the decarboxylation of 2,3-dihydroxybenzoate to catechol, but does not act on 2,4-dihydroxybenzoate, 2,5-dihydroxybenzoate, 3,4-dihydroxybenzoate, 3,5-dihydroxybenzoate, 2-hydroxybenzoate, or 3-hydroxybenzoate. Only resorcinol is carboxylated by the reverse reaction. This Rhizobium sp. (strain MTP-10005) protein is Gamma-resorcylate decarboxylase.